The primary structure comprises 350 residues: MNPRGLFQDFNPSKFLIYACLLLFSVLLPLRLDGIIQWSYWAVFAPIWLWKLLVIVGASVGAGVWARNPRYRTEGEACVEFKAMLIAVGIHLLLLMFEILVCDRVERGTHFWLLVFMPLFFVSPVSVAACVWGFRHDRSLELEILCSVNILQFIFIALRLDRIIHWPWLVVFVPLWILMSFLCLVVLYYIVWSLLFLRSLDVVAEQRRTHVTMAISWITIVVPLLIFEVLLVHRLDDHNTFSYISIFIPLWLSLLTLMATTFRRKGGNHWWFGIRRDFCQFLLEVFPFLREYGNISYDLHHEDSEDAEDASVSEAPKIAPMFGKKARVVITQSPGKYVPPPPKLNIDMPD.

7 helical membrane-spanning segments follow: residues 16–36, 41–61, 81–101, 111–131, 168–188, 211–231, and 240–260; these read LIYA…DGII, WAVF…ASVG, FKAM…EILV, FWLL…AACV, WLVV…VVLY, VTMA…EVLL, and TFSY…LMAT.

Belongs to the TMEM185 family.

The protein localises to the membrane. This Mus musculus (Mouse) protein is Transmembrane protein 185B (Tmem185b).